Consider the following 269-residue polypeptide: Acyl-CoA-binding domain-containing protein 4 (269 aa).

Positions 12-101 (CQKQFQAAVS…MKLVAQKVID (90 aa)) constitute an ACB domain. Residues 23–32 (IQNLPKNGSY), 43–47 (YSYYK), Lys69, and Tyr88 contribute to the an acyl-CoA site. Disordered stretches follow at residues 150–175 (GAVS…PRDL), 195–226 (EQRA…QCSA), and 248–269 (VALP…SAAN). Pro residues predominate over residues 156–167 (PCLPKEPAPPSP). Ser166 and Ser171 each carry phosphoserine.

Binds medium- and long-chain acyl-CoA esters and may function as an intracellular carrier of acyl-CoA esters. In Pongo abelii (Sumatran orangutan), this protein is Acyl-CoA-binding domain-containing protein 4 (ACBD4).